The following is a 372-amino-acid chain: Adaptive-response sensory-kinase SasA (372 aa).

In terms of domain architecture, Histidine kinase spans 147 to 360; the sequence is MVAHELRTPL…CFHFTVPVWQ (214 aa). His150 carries the post-translational modification Phosphohistidine; by autocatalysis.

In terms of assembly, homooligomerizes. Interacts with KaiC. Participates in the KaiBC complex, whose core is composed of a KaiC homohexamer and 6 KaiB.

The catalysed reaction is ATP + protein L-histidine = ADP + protein N-phospho-L-histidine.. In terms of biological role, member of the two-component regulatory system SasA/RpaA involved in genome-wide circadian gene expression. One of several clock output pathways. Participates in the Kai clock protein complex, the main circadian regulator in cyanobacteria, via its interaction with KaiC. KaiC enhances the autophosphorylation activity of SasA, which then transfers its phosphate group to RpaA to activate it. In addition to its output function, recruits fold-shifted KaiB (KaiB(fs)) to KaiC to cooperatively form the KaiB(6):KaiC(6) complex (independent of SasA kinase activity). Required for robustness of the circadian rhythm of gene expression and is involved in clock output, also required for adaptation to light/dark cycles. The protein is Adaptive-response sensory-kinase SasA of Prochlorococcus marinus subsp. pastoris (strain CCMP1986 / NIES-2087 / MED4).